A 217-amino-acid polypeptide reads, in one-letter code: Adenylate kinase (217 aa).

Residue 10–15 (GAGKGT) coordinates ATP. The segment at 30–59 (STGDIFRANIKNNTELGAKAKEYMDQGLLV) is NMP. AMP contacts are provided by residues Thr-31, Arg-36, 57 to 59 (LLV), 85 to 88 (GFPR), and Gln-92. The segment at 126–163 (GRRACVSCGGTYHVVFTPTKKEGICDACGGELTIRDDD) is LID. Arg-127 contributes to the ATP binding site. Positions 130 and 133 each coordinate Zn(2+). 136–137 (TY) provides a ligand contact to ATP. 2 residues coordinate Zn(2+): Cys-150 and Cys-153. AMP is bound by residues Arg-160 and Arg-171. Lys-199 contributes to the ATP binding site.

This sequence belongs to the adenylate kinase family. Monomer.

It localises to the cytoplasm. The catalysed reaction is AMP + ATP = 2 ADP. It participates in purine metabolism; AMP biosynthesis via salvage pathway; AMP from ADP: step 1/1. Functionally, catalyzes the reversible transfer of the terminal phosphate group between ATP and AMP. Plays an important role in cellular energy homeostasis and in adenine nucleotide metabolism. This chain is Adenylate kinase, found in Lachnoclostridium phytofermentans (strain ATCC 700394 / DSM 18823 / ISDg) (Clostridium phytofermentans).